We begin with the raw amino-acid sequence, 81 residues long: ATP synthase subunit c, chloroplastic (81 aa).

2 helical membrane-spanning segments follow: residues 3-23 (AIVSAASVIAAGLAVGLAAIG) and 57-77 (LAFMESLTIYGLVVALSLLFA).

It belongs to the ATPase C chain family. F-type ATPases have 2 components, F(1) - the catalytic core - and F(0) - the membrane proton channel. F(1) has five subunits: alpha(3), beta(3), gamma(1), delta(1), epsilon(1). F(0) has four main subunits: a(1), b(1), b'(1) and c(10-14). The alpha and beta chains form an alternating ring which encloses part of the gamma chain. F(1) is attached to F(0) by a central stalk formed by the gamma and epsilon chains, while a peripheral stalk is formed by the delta, b and b' chains.

The protein localises to the plastid. The protein resides in the chloroplast thylakoid membrane. In terms of biological role, f(1)F(0) ATP synthase produces ATP from ADP in the presence of a proton or sodium gradient. F-type ATPases consist of two structural domains, F(1) containing the extramembraneous catalytic core and F(0) containing the membrane proton channel, linked together by a central stalk and a peripheral stalk. During catalysis, ATP synthesis in the catalytic domain of F(1) is coupled via a rotary mechanism of the central stalk subunits to proton translocation. Functionally, key component of the F(0) channel; it plays a direct role in translocation across the membrane. A homomeric c-ring of between 10-14 subunits forms the central stalk rotor element with the F(1) delta and epsilon subunits. The sequence is that of ATP synthase subunit c, chloroplastic from Cyanidioschyzon merolae (strain NIES-3377 / 10D) (Unicellular red alga).